The sequence spans 448 residues: Allantoinase (448 aa).

Residues H60, H62, K147, H183, H239, and D312 each contribute to the Zn(2+) site. An N6-carboxylysine modification is found at K147.

The protein belongs to the metallo-dependent hydrolases superfamily. Allantoinase family. Homotetramer. It depends on Zn(2+) as a cofactor. Post-translationally, carboxylation allows a single lysine to coordinate two zinc ions.

The catalysed reaction is (S)-allantoin + H2O = allantoate + H(+). It functions in the pathway nitrogen metabolism; (S)-allantoin degradation; allantoate from (S)-allantoin: step 1/1. In terms of biological role, catalyzes the conversion of allantoin (5-ureidohydantoin) to allantoic acid by hydrolytic cleavage of the five-member hydantoin ring. In Deinococcus radiodurans (strain ATCC 13939 / DSM 20539 / JCM 16871 / CCUG 27074 / LMG 4051 / NBRC 15346 / NCIMB 9279 / VKM B-1422 / R1), this protein is Allantoinase.